Consider the following 757-residue polypeptide: Transmembrane channel-like protein 1 (757 aa).

Positions 1–74 (MLQIQVEEKE…RRRLRRGAEE (74 aa)) are disordered. At 1 to 176 (MLQIQVEEKE…KIKAIESQFG (176 aa)) the chain is on the cytoplasmic side. Positions 8 to 23 (EKEEDTEESSSEEEED) are enriched in acidic residues. S30 carries the post-translational modification Phosphoserine. Residue T38 is modified to Phosphothreonine. Acidic residues predominate over residues 43-54 (NEDDPEPEPEDE). Residues 81–130 (EELERLKALLDENRQMIATVKCKPWKMEKKIEVLKEAKKFVSENEGALGK) form a required for interaction with CIB2 region. S122 bears the Phosphoserine mark. The chain crosses the membrane as a helical span at residues 177–214 (SSVASYFLFLRWMYGVNMVLFVLTFSLIMLPEYLWGLP). The Extracellular segment spans residues 215–265 (YGSLPRKTVPRAEEASAANFGVLYDFNGLAQYSVLFYGYYDNKRTIGWLNF). Residues 266 to 297 (RLPLSYFLVGIMCIGYSFLVVLKAMTKNIGDD) form a helical membrane-spanning segment. Residues 298–352 (GGGDDNTFNFSWKVFCSWDYLIGNPETADNKFNSITMNFKEAIIEERAAQVEENI) form a required for interaction with CIB2 region. Residues 298-353 (GGGDDNTFNFSWKVFCSWDYLIGNPETADNKFNSITMNFKEAIIEERAAQVEENIH) are Cytoplasmic-facing. At S308 the chain carries Phosphoserine. A helical transmembrane segment spans residues 354–384 (LIRFLRFLANFFVFLTLGASGYLIFWAVKRS). Topologically, residues 385-396 (QEFAQQDPDTLG) are extracellular. The residue at position 394 (T394) is a Phosphothreonine. Residues 397 to 424 (WWEKNEMNMVMSLLGMFCPTLFDLFAEL) form a helical membrane-spanning segment. The Cytoplasmic segment spans residues 425-428 (EDYH). The helical transmembrane segment at 429–463 (PLIALKWLLGRIFALLLGNLYVFILALMDEINNKI) threads the bilayer. The Extracellular portion of the chain corresponds to 464-512 (EEEKLVKANITLWEANMIKAYNESLSGLSGNTTGAPFFVHPADVPRGPC). The chain crosses the membrane as a helical span at residues 513-550 (WETMVGQEFVRLTVSDVLTTYVTILIGDFLRACFVRFC). Residues 551-569 (NYCWCWDLEYGYPSYTEFD) are Cytoplasmic-facing. The chain crosses the membrane as a helical span at residues 570-590 (ISGNVLALIFNQGMIWMGSFF). The Extracellular segment spans residues 591 to 593 (APS). A helical membrane pass occupies residues 594-616 (LPGINILRLHTSMYFQCWAVMCC). The Cytoplasmic segment spans residues 617–630 (NVPEARVFKASRSN). A helical membrane pass occupies residues 631 to 654 (NFYLGMLLLILFLSTMPVLYMIVS). Residues 655-697 (LPPSFDCGPFSGKNRMFEVIGETLEHDFPSWMAKILRQLSNPG) are Extracellular-facing. A helical membrane pass occupies residues 698-731 (LVIAVILVMVLTIYYLNATAKGQKAANLDLKKKM). Topologically, residues 732–757 (KQQALENKMRNKKMAAARAAAAAGGQ) are cytoplasmic.

It belongs to the TMC family. As to quaternary structure, forms the MET channel composed of TMC dimer (TMC1 or TMC2), TMIE, TOMT, CIB (CIB2 or CIB3), LHFPL5 and PCDH15. Interacts with PIEZO1 and PIEZO2; the interaction may be part of the MET complex. The interaction of TMC1 and TMC2 with TOMT is required for the transportation of TMC1/2 into the stereocilia of hair cells. Interacts (via N-terminus) with both isoforms CD1 and CD3 of PCDH15. Can form a heterodimer with TMC2, TMC5 or TMC7. Detected in cochlear inner and outer hair cells and in neurosensory epithelia of the vestibular end organs. Also expressed in cortex, cerebellum, eye, colon, ovary and testis.

It is found in the cell membrane. The catalysed reaction is Ca(2+)(in) = Ca(2+)(out). In terms of biological role, pore-forming subunit of the mechanotransducer (MET) non-selective cation channel complex located at the tips of stereocilia of cochlear hair cells and that mediates sensory transduction in the auditory system. The MET complex is composed of two dimeric pore-forming ion-conducting transmembrane TMC (TMC1 or TMC2) subunits, several auxiliary proteins including LHFPL5, TMIE, CIB2/3 and TOMT, the tip-link PCDH15, and possibly the PIEZO subunits. MET channel is activated by tension in the tip-link extending from the side wall of one stereocilium to the tip of the adjacent shorter stereocilium, where the channel is located. TMC1 MET channel is highly permeable to calcium and likely transports monovalent cations. Also involved in vestibular hair cells transduction current. This chain is Transmembrane channel-like protein 1, found in Mus musculus (Mouse).